Reading from the N-terminus, the 151-residue chain is Methylglyoxal synthase (151 aa).

The MGS-like domain occupies 6 to 151 (RVMPAHKHIA…DYDAYLAERV (146 aa)). Substrate contacts are provided by residues H19, K23, 45 to 48 (TGTT), and 65 to 66 (SG). D71 (proton donor/acceptor) is an active-site residue. H98 serves as a coordination point for substrate.

Belongs to the methylglyoxal synthase family.

It carries out the reaction dihydroxyacetone phosphate = methylglyoxal + phosphate. In terms of biological role, catalyzes the formation of methylglyoxal from dihydroxyacetone phosphate. This Aliivibrio fischeri (strain ATCC 700601 / ES114) (Vibrio fischeri) protein is Methylglyoxal synthase.